The primary structure comprises 166 residues: Nucleotide-binding protein SUN_0226 (166 aa).

This sequence belongs to the YajQ family.

Its function is as follows. Nucleotide-binding protein. In Sulfurovum sp. (strain NBC37-1), this protein is Nucleotide-binding protein SUN_0226.